The following is a 350-amino-acid chain: Outer membrane porin PhoE (350 aa).

A signal peptide spans 1 to 20 (MNKSTLAIVVSIIASASVHA).

The protein belongs to the Gram-negative porin family. In terms of assembly, homotrimer.

The protein localises to the cell outer membrane. Functionally, uptake of inorganic phosphate, phosphorylated compounds, and some other negatively charged solutes. The sequence is that of Outer membrane porin PhoE (phoE) from Salmonella typhimurium (strain LT2 / SGSC1412 / ATCC 700720).